The chain runs to 87 residues: Neutrophil antibiotic peptide NP-3A (87 aa).

The N-terminal stretch at 1–19 (MRTLTLLTTLLLLALHTQA) is a signal peptide. Residues 20-58 (ESPQGSTKEAPDEEQDISVFFGGDKGTALQDAAVKAGVT) constitute a propeptide that is removed on maturation. 3 disulfide bridges follow: Cys59–Cys87, Cys61–Cys76, and Cys66–Cys86.

This sequence belongs to the alpha-defensin family. Highest expression in bone marrow and to a much lesser extent in small intestine.

Its subcellular location is the secreted. Functionally, active in vitro against S.aureus, fungi, Gram-positive and Gram-negative bacteria and to a lesser extent against an enveloped virus. The polypeptide is Neutrophil antibiotic peptide NP-3A (Rattus norvegicus (Rat)).